The primary structure comprises 137 residues: 5-hydroxytryptamine receptor 4 (137 aa).

A helical membrane pass occupies residues 12–35 (TPLRVAVLLAGCWAIPVLISFLPI). N-linked (GlcNAc...) asparagine glycosylation is present at Asn58. A helical transmembrane segment spans residues 67–90 (NKPYAITCSVVAFYIPFLLMVLAY). The interval 112 to 137 (APAEGRPPSADQHSTHRMRTETKAAK) is disordered.

The protein belongs to the G-protein coupled receptor 1 family. Interacts (via C-terminus 330-346 AA) with GRK5; this interaction is promoted by 5-HT (serotonin).

The protein localises to the cell membrane. Its subcellular location is the endosome membrane. Its function is as follows. G-protein coupled receptor for 5-hydroxytryptamine (serotonin), a biogenic hormone that functions as a neurotransmitter, a hormone and a mitogen. Ligand binding causes a conformation change that triggers signaling via guanine nucleotide-binding proteins (G proteins) and modulates the activity of downstream effectors. HTR4 is coupled to G(s) G alpha proteins and mediates activation of adenylate cyclase activity. The chain is 5-hydroxytryptamine receptor 4 (HTR4) from Sus scrofa (Pig).